The primary structure comprises 279 residues: Energy-coupling factor transporter ATP-binding protein EcfA1 (279 aa).

Positions 6–240 (ISVDHLTYQY…GTQLVEMGLD (235 aa)) constitute an ABC transporter domain. 40-47 (GHNGSGKS) provides a ligand contact to ATP.

Belongs to the ABC transporter superfamily. Energy-coupling factor EcfA family. In terms of assembly, forms a stable energy-coupling factor (ECF) transporter complex composed of 2 membrane-embedded substrate-binding proteins (S component), 2 ATP-binding proteins (A component) and 2 transmembrane proteins (T component).

The protein localises to the cell membrane. Functionally, ATP-binding (A) component of a common energy-coupling factor (ECF) ABC-transporter complex. Unlike classic ABC transporters this ECF transporter provides the energy necessary to transport a number of different substrates. The polypeptide is Energy-coupling factor transporter ATP-binding protein EcfA1 (Levilactobacillus brevis (strain ATCC 367 / BCRC 12310 / CIP 105137 / JCM 1170 / LMG 11437 / NCIMB 947 / NCTC 947) (Lactobacillus brevis)).